A 92-amino-acid chain; its full sequence is Small ribosomal subunit protein uS19c (92 aa).

This sequence belongs to the universal ribosomal protein uS19 family.

Its subcellular location is the plastid. The protein resides in the chloroplast. In terms of biological role, protein S19 forms a complex with S13 that binds strongly to the 16S ribosomal RNA. This Tupiella akineta (Green alga) protein is Small ribosomal subunit protein uS19c.